A 28-amino-acid chain; its full sequence is SLANFLSMTLTAAKRKPKEYDGYGNYCG.

Ca(2+) is bound at residue G28.

The cofactor is Ca(2+). Expressed by the venom gland.

It localises to the secreted. It carries out the reaction a 1,2-diacyl-sn-glycero-3-phosphocholine + H2O = a 1-acyl-sn-glycero-3-phosphocholine + a fatty acid + H(+). Its function is as follows. PLA2 catalyzes the calcium-dependent hydrolysis of the 2-acyl groups in 3-sn-phosphoglycerides. The protein is Phospholipase A2 of Scolopendra dehaani (Thai centipede).